The sequence spans 150 residues: MSDNHTLQIEEILDLLPHRYPFLLVDRVLDFEEGKFLRAVKNVSFNEPFFQGHFPGKPIFPGVLILEAMAQATGILAFKSVGKLEPGELYYFAAIDGARFKRPVLPGDQMVLEVEFIKERRGVARFKGVAKVDGEIACEAEMMCARRREV.

His53 is an active-site residue.

This sequence belongs to the thioester dehydratase family. FabZ subfamily.

The protein resides in the cytoplasm. It catalyses the reaction a (3R)-hydroxyacyl-[ACP] = a (2E)-enoyl-[ACP] + H2O. Functionally, involved in unsaturated fatty acids biosynthesis. Catalyzes the dehydration of short chain beta-hydroxyacyl-ACPs and long chain saturated and unsaturated beta-hydroxyacyl-ACPs. The chain is 3-hydroxyacyl-[acyl-carrier-protein] dehydratase FabZ from Proteus mirabilis (strain HI4320).